The sequence spans 486 residues: Galactose-1-phosphate uridylyltransferase (486 aa).

Belongs to the galactose-1-phosphate uridylyltransferase type 2 family.

It localises to the cytoplasm. The catalysed reaction is alpha-D-galactose 1-phosphate + UDP-alpha-D-glucose = alpha-D-glucose 1-phosphate + UDP-alpha-D-galactose. It participates in carbohydrate metabolism; galactose metabolism. The sequence is that of Galactose-1-phosphate uridylyltransferase from Lacticaseibacillus casei (Lactobacillus casei).